The chain runs to 196 residues: MSNNMRKLFSMIADSKDKKEKLIESLQENELLSTDEKKKIIDQIKTMHDFFKQMHTNKGALDKVLRNYMKDYRAVIKSIGVDKFKKVYRLLESETMELLHAIAENPNFLFSKFDRSILGIFLPFFSKPIMFKMSIREMDSQIELYGTKLPLLKLFVMTDEEMNFYANLKTIEQYNDYVRDLLMKFDLEKYMKEKGV.

This is CAG pathogenicity island protein 13 (cagS) from Helicobacter pylori (strain ATCC 700392 / 26695) (Campylobacter pylori).